Reading from the N-terminus, the 327-residue chain is Complex I intermediate-associated protein 30, mitochondrial (327 aa).

Residues 1–24 (MALVHKLLRDTYILRKFSKPTSAL) constitute a mitochondrion transit peptide. The interval 42–63 (PVASPGKASSQRKTEGDLQGDH) is disordered. Basic and acidic residues predominate over residues 53–63 (RKTEGDLQGDH). Ser318 bears the Phosphoserine mark.

This sequence belongs to the CIA30 family. In terms of assembly, part of the mitochondrial complex I assembly/MCIA complex that comprises at least the core subunits TMEM126B, NDUFAF1, ECSIT and ACAD9 and complement subunits such as COA1 and TMEM186. Interacts with ECSIT. Interacts with ACAD9. At early stages of complex I assembly, it is found in intermediate subcomplexes that contain different subunits including NDUFB6, NDUFA6, NDUFA9, NDUFS3, NDUFS7, ND1, ND2 and ND3. Interacts with TMEM70 and TMEM242.

It localises to the mitochondrion. It is found in the mitochondrion matrix. In terms of biological role, as part of the MCIA complex, involved in the assembly of the mitochondrial complex I. This is Complex I intermediate-associated protein 30, mitochondrial from Gorilla gorilla gorilla (Western lowland gorilla).